We begin with the raw amino-acid sequence, 270 residues long: uncharacterized protein (270 aa).

The signal sequence occupies residues 1–22 (MEYIKKIALYMSVLLLIIFIGG). Cys-23 is lipidated: N-palmitoyl cysteine. Cys-23 carries S-diacylglycerol cysteine lipidation.

It belongs to the staphylococcal tandem lipoprotein family.

The protein localises to the cell membrane. This is an uncharacterized protein from Staphylococcus aureus (strain N315).